The following is a 107-amino-acid chain: U1-lycotoxin-Ls1k (107 aa).

Positions 1-20 (MMKVLVVVALLVTLISYSSS) are cleaved as a signal peptide. The propeptide occupies 21-41 (EGIDDLEADELLSLMANEQTR). Disulfide bonds link Cys-44–Cys-59, Cys-51–Cys-68, Cys-58–Cys-86, and Cys-70–Cys-84.

Belongs to the neurotoxin 19 (CSTX) family. 04 (U1-Lctx) subfamily. As to expression, expressed by the venom gland.

The protein localises to the secreted. In Lycosa singoriensis (Wolf spider), this protein is U1-lycotoxin-Ls1k.